A 417-amino-acid polypeptide reads, in one-letter code: NADH-quinone oxidoreductase subunit D (417 aa).

The protein belongs to the complex I 49 kDa subunit family. NDH-1 is composed of 14 different subunits. Subunits NuoB, C, D, E, F, and G constitute the peripheral sector of the complex.

The protein resides in the cell inner membrane. The catalysed reaction is a quinone + NADH + 5 H(+)(in) = a quinol + NAD(+) + 4 H(+)(out). Functionally, NDH-1 shuttles electrons from NADH, via FMN and iron-sulfur (Fe-S) centers, to quinones in the respiratory chain. The immediate electron acceptor for the enzyme in this species is believed to be ubiquinone. Couples the redox reaction to proton translocation (for every two electrons transferred, four hydrogen ions are translocated across the cytoplasmic membrane), and thus conserves the redox energy in a proton gradient. The protein is NADH-quinone oxidoreductase subunit D of Coxiella burnetii (strain CbuG_Q212) (Coxiella burnetii (strain Q212)).